The sequence spans 569 residues: Isochorismate synthase 1, chloroplastic (569 aa).

A chloroplast-targeting transit peptide spans 1 to 45; the sequence is MASLQFSSQFLGSNTKTHSSIISISRSYSPTPFTRFSRKKYESCS.

This sequence belongs to the isochorismate synthase family. In terms of assembly, monomer. Requires Mg(2+) as cofactor. Leaves.

The protein localises to the plastid. Its subcellular location is the chloroplast. It carries out the reaction chorismate = isochorismate. It participates in siderophore biosynthesis; salicylate biosynthesis. In terms of biological role, isochorismate synthase involved in the synthesis of salicylic acid (SA) required for both local and systemic acquired resistance (LAR and SAR) while SA synthesized through the phenylalanine ammonium lyase (PAL) pathway seems to potentiate plant cell death. Also involved in phylloquinone (vitamin K1) synthesis. Has no isochorismate pyruvate lyase (IPL) activity. This Arabidopsis thaliana (Mouse-ear cress) protein is Isochorismate synthase 1, chloroplastic (ICS1).